We begin with the raw amino-acid sequence, 594 residues long: Glutamate decarboxylase 1 (594 aa).

Over residues 1 to 13 (MASSTPSSSATSS) the composition is skewed to low complexity. A disordered region spans residues 1–23 (MASSTPSSSATSSNAGADPNTTN). Phosphoserine is present on serine 78. 190–192 (QLS) provides a ligand contact to 4-aminobutanoate. Lysine 405 is modified (N6-(pyridoxal phosphate)lysine). Residue arginine 567 participates in 4-aminobutanoate binding.

This sequence belongs to the group II decarboxylase family. In terms of assembly, homodimer. Requires pyridoxal 5'-phosphate as cofactor.

It catalyses the reaction L-glutamate + H(+) = 4-aminobutanoate + CO2. Its function is as follows. Catalyzes the synthesis of the inhibitory neurotransmitter gamma-aminobutyric acid (GABA) with pyridoxal 5'-phosphate as cofactor. The chain is Glutamate decarboxylase 1 (GAD1) from Bos taurus (Bovine).